The primary structure comprises 48 residues: Lantibiotic salivaricin-A (48 aa).

The propeptide occupies 1-26 (MKNSKDILNNAIEEVSEKELMEVAGG). 2 consecutive cross-links (beta-methyllanthionine (Thr-Cys)) follow at residues 35-40 (TITDDC) and 37-47 (TDDCPNSVFVC). A cross-link (lanthionine (Ser-Cys)) is located at residues 43-48 (SVFVCC).

It belongs to the type A lantibiotic family. In terms of processing, maturation of lantibiotics involves the enzymatic conversion of Thr, and Ser into dehydrated AA and the formation of thioether bonds with cysteine. This is followed by membrane translocation and cleavage of the modified precursor.

Functionally, lanthionine-containing peptide antibiotic (lantibiotic) active on Gram-positive bacteria. The bactericidal activity of lantibiotics is based on depolarization of energized bacterial cytoplasmic membranes, initiated by the formation of aqueous transmembrane pores. The polypeptide is Lantibiotic salivaricin-A (salA) (Streptococcus salivarius).